Reading from the N-terminus, the 349-residue chain is Anthranilate phosphoribosyltransferase (349 aa).

5-phospho-alpha-D-ribose 1-diphosphate is bound by residues glycine 82, 85–86 (GD), 92–95 (NVST), 110–118 (KHGNRAVSG), and serine 122. Glycine 82 lines the anthranilate pocket. Serine 94 lines the Mg(2+) pocket. Residue asparagine 113 coordinates anthranilate. Anthranilate is bound at residue arginine 168. Positions 227 and 228 each coordinate Mg(2+).

It belongs to the anthranilate phosphoribosyltransferase family. In terms of assembly, homodimer. Mg(2+) is required as a cofactor.

The enzyme catalyses N-(5-phospho-beta-D-ribosyl)anthranilate + diphosphate = 5-phospho-alpha-D-ribose 1-diphosphate + anthranilate. It functions in the pathway amino-acid biosynthesis; L-tryptophan biosynthesis; L-tryptophan from chorismate: step 2/5. Catalyzes the transfer of the phosphoribosyl group of 5-phosphorylribose-1-pyrophosphate (PRPP) to anthranilate to yield N-(5'-phosphoribosyl)-anthranilate (PRA). The polypeptide is Anthranilate phosphoribosyltransferase (Pseudomonas savastanoi pv. phaseolicola (strain 1448A / Race 6) (Pseudomonas syringae pv. phaseolicola (strain 1448A / Race 6))).